We begin with the raw amino-acid sequence, 520 residues long: GMP synthase [glutamine-hydrolyzing] (520 aa).

Residues 3–200 (AIAIIDFGSQ…FLDIANCKRD (198 aa)) form the Glutamine amidotransferase type-1 domain. The Nucleophile role is filled by Cys-84. Active-site residues include His-175 and Glu-177. Positions 201–386 (WTMKSIIEKQ…IGLSNEIIFQ (186 aa)) constitute a GMPS ATP-PPase domain. Position 228–234 (228–234 (SGGVDSS)) interacts with ATP.

Homodimer.

It catalyses the reaction XMP + L-glutamine + ATP + H2O = GMP + L-glutamate + AMP + diphosphate + 2 H(+). It functions in the pathway purine metabolism; GMP biosynthesis; GMP from XMP (L-Gln route): step 1/1. Functionally, catalyzes the synthesis of GMP from XMP. The protein is GMP synthase [glutamine-hydrolyzing] of Wolbachia sp. subsp. Brugia malayi (strain TRS).